A 284-amino-acid polypeptide reads, in one-letter code: MSMLPSFGFTQEQVACVCEVLQQGGNLERLGRFLWSLPACDHLHKNESVLKAKAVVAFHRGNFRELYKILESHQFSPHNHPKLQQLWLKAHYIEAEKLRGRPLGAVGKYRVRRKFPLPRTIWDGEETSYCFKEKSRGVLREWYTHNPYPSPREKRELAEATGLTTTQVSNWFKNRRQRDRAAEAKERENSENNNTGANKQNQLSPLDGGKSLMSSSEDEFSPPQSPDQNSVLLLQGNMSHPGASAYSMTGLGAAQSVHGMQGHPHQLQDSLLGPLTSSLVDLGS.

The homeobox DNA-binding region spans 124–183; that stretch reads GEETSYCFKEKSRGVLREWYTHNPYPSPREKRELAEATGLTTTQVSNWFKNRRQRDRAAE. The interval 167 to 238 is disordered; the sequence is QVSNWFKNRR…NSVLLLQGNM (72 aa). A compositionally biased stretch (basic and acidic residues) spans 179 to 190; the sequence is DRAAEAKERENS. Composition is skewed to polar residues over residues 191–204 and 226–238; these read ENNNTGANKQNQLS and PDQNSVLLLQGNM.

It belongs to the SIX/Sine oculis homeobox family. As to quaternary structure, interacts with eya1.

The protein localises to the nucleus. It localises to the cytoplasm. Transcription factor that is involved in the regulation of cell proliferation, apoptosis and embryonic development. Depending on context, functions as a transcriptional repressor or activator. Transcriptional activation is enhanced by eya1 (in vitro). Plays an important role in the development of the inner ear, where it promotes hair cell proliferation and inhibits proliferation of neural progenitor cells. Required for normal myogenesis. Plays a role in the development of fast muscle fibers throughout the body, as well as the development of craniofacial muscles. Required for normal expression of myod1 and myog during myogenesis. The sequence is that of Homeobox protein six1b (six1b) from Danio rerio (Zebrafish).